A 69-amino-acid chain; its full sequence is Light-harvesting protein B-870 beta chain (69 aa).

The propeptide occupies 1 to 2 (MA). At 3-22 (EVKQESLSGITEGEAKEFHK) the chain is on the cytoplasmic side. Residues His-21 and His-39 each contribute to the a bacteriochlorophyll site. Residues 23–45 (IFTSSILVFFGVAAFAHLLVWIW) traverse the membrane as a helical segment. Residues 46–56 (RPWVPGPNGYS) lie on the Periplasmic side of the membrane. The propeptide occupies 57–69 (ALETLTQTLTYLS).

The protein belongs to the antenna complex beta subunit family. As to quaternary structure, the core complex is formed by different alpha and beta chains, binding bacteriochlorophyll molecules, and arranged most probably in tetrameric structures disposed around the reaction center. The non-pigmented gamma chains may constitute additional components.

The protein resides in the cell inner membrane. Antenna complexes are light-harvesting systems, which transfer the excitation energy to the reaction centers. The chain is Light-harvesting protein B-870 beta chain from Rhodospirillum rubrum (strain ATCC 11170 / ATH 1.1.1 / DSM 467 / LMG 4362 / NCIMB 8255 / S1).